Here is a 248-residue protein sequence, read N- to C-terminus: Cobalt transport protein CbiM (248 aa).

The signal sequence occupies residues 1–31 (MLKVIKKYRKFITFLMIGLVYTLAYPATAHA). Transmembrane regions (helical) follow at residues 39–59 (LPPR…IYGL), 75–95 (VMLA…LPSV), 107–127 (LGTV…VLLF), 139–159 (TLGA…YAVW), 173–195 (LFLC…LAIV), and 213–233 (IYAI…VIVY).

Belongs to the CbiM family. In terms of assembly, forms an energy-coupling factor (ECF) transporter complex composed of an ATP-binding protein (A component, CbiO), a transmembrane protein (T component, CbiQ) and 2 possible substrate-capture proteins (S components, CbiM and CbiN) of unknown stoichimetry.

It is found in the cell membrane. Its pathway is cofactor biosynthesis; adenosylcobalamin biosynthesis. Its function is as follows. Part of the energy-coupling factor (ECF) transporter complex CbiMNOQ involved in cobalt import. The sequence is that of Cobalt transport protein CbiM from Limosilactobacillus reuteri (strain DSM 20016) (Lactobacillus reuteri).